Here is a 238-residue protein sequence, read N- to C-terminus: Orotidine 5'-phosphate decarboxylase (238 aa).

Substrate is bound by residues Asp-18, Lys-40, 67-76 (DMKLLDIDNT), Thr-122, Arg-183, Gln-192, and Arg-213. The active-site Proton donor is the Lys-69.

It belongs to the OMP decarboxylase family. Type 1 subfamily. In terms of assembly, homodimer.

The catalysed reaction is orotidine 5'-phosphate + H(+) = UMP + CO2. The protein operates within pyrimidine metabolism; UMP biosynthesis via de novo pathway; UMP from orotate: step 2/2. In terms of biological role, catalyzes the decarboxylation of orotidine 5'-monophosphate (OMP) to uridine 5'-monophosphate (UMP). The chain is Orotidine 5'-phosphate decarboxylase from Brucella abortus (strain S19).